We begin with the raw amino-acid sequence, 406 residues long: Ribose-phosphate pyrophosphokinase 3, mitochondrial (406 aa).

The disordered stretch occupies residues 1–32; it reads MAATPHRHLLQPCKNPAISSSETLKPSSSFSL. Residues 1 to 87 constitute a mitochondrion transit peptide; it reads MAATPHRHLL…RRFQMSSNQE (87 aa). Residues 18-32 are compositionally biased toward low complexity; the sequence is ISSSETLKPSSSFSL. Mg(2+)-binding residues include D226 and H228. The segment at 309-324 is binding of phosphoribosylpyrophosphate; the sequence is GRHVVIVDDLVQSGGT.

This sequence belongs to the ribose-phosphate pyrophosphokinase family.

Its subcellular location is the mitochondrion. The catalysed reaction is D-ribose 5-phosphate + ATP = 5-phospho-alpha-D-ribose 1-diphosphate + AMP + H(+). The protein is Ribose-phosphate pyrophosphokinase 3, mitochondrial (PRS3) of Spinacia oleracea (Spinach).